The sequence spans 117 residues: Photosystem II reaction center Psb28 protein (117 aa).

It belongs to the Psb28 family. As to quaternary structure, part of the photosystem II complex.

The protein resides in the cellular thylakoid membrane. The protein is Photosystem II reaction center Psb28 protein of Prochlorococcus marinus subsp. pastoris (strain CCMP1986 / NIES-2087 / MED4).